Consider the following 325-residue polypeptide: Glutarate 2-hydroxylase (325 aa).

Positions 160, 162, and 292 each coordinate Fe cation.

The protein belongs to the glutarate hydroxylase family. In terms of assembly, homotetramer. Fe(2+) serves as cofactor.

The enzyme catalyses glutarate + 2-oxoglutarate + O2 = (S)-2-hydroxyglutarate + succinate + CO2. Its pathway is amino-acid degradation. Acts as an alpha-ketoglutarate-dependent dioxygenase catalyzing hydroxylation of glutarate (GA) to L-2-hydroxyglutarate (L2HG). Functions in a L-lysine degradation pathway that proceeds via cadaverine, glutarate and L-2-hydroxyglutarate. The sequence is that of Glutarate 2-hydroxylase from Escherichia coli O6:K15:H31 (strain 536 / UPEC).